Here is a 251-residue protein sequence, read N- to C-terminus: GTP cyclohydrolase 1 type 2 homolog (251 aa).

A divalent metal cation contacts are provided by H64, H65, D102, H219, and E223.

The protein belongs to the GTP cyclohydrolase I type 2/NIF3 family. As to quaternary structure, homohexamer.

This chain is GTP cyclohydrolase 1 type 2 homolog, found in Chlamydia trachomatis serovar D (strain ATCC VR-885 / DSM 19411 / UW-3/Cx).